The chain runs to 213 residues: Putative 3-methyladenine DNA glycosylase (213 aa).

Belongs to the DNA glycosylase MPG family.

The protein is Putative 3-methyladenine DNA glycosylase of Leifsonia xyli subsp. xyli (strain CTCB07).